The following is a 384-amino-acid chain: 3,7-dimethylxanthine N-methyltransferase 1 (384 aa).

8 residues coordinate S-adenosyl-L-homocysteine: tyrosine 18, cysteine 61, asparagine 66, aspartate 100, leucine 101, serine 139, phenylalanine 140, and cysteine 156. Residue tyrosine 157 coordinates theobromine. Cysteine 158 contacts S-adenosyl-L-homocysteine. Histidine 160 and tryptophan 161 together coordinate theobromine. Residue asparagine 178 participates in Mg(2+) binding. Position 237 (serine 237) interacts with theobromine. Mg(2+)-binding residues include aspartate 260, phenylalanine 262, and asparagine 263. Tyrosine 368 is a binding site for theobromine.

This sequence belongs to the methyltransferase superfamily. Type-7 methyltransferase family. It depends on Mg(2+) as a cofactor. In terms of tissue distribution, highly expressed in developing endosperm and immature fruits (grains). Detected in young leaves and flower buds, but not in mature fruits.

The catalysed reaction is theobromine + S-adenosyl-L-methionine = caffeine + S-adenosyl-L-homocysteine + H(+). The enzyme catalyses 1,7-dimethylxanthine + S-adenosyl-L-methionine = caffeine + S-adenosyl-L-homocysteine + H(+). It catalyses the reaction 7-methylxanthine + S-adenosyl-L-methionine = theobromine + S-adenosyl-L-homocysteine + H(+). It functions in the pathway alkaloid biosynthesis. In terms of biological role, involved in the biosynthesis of caffeine. Catalyzes the conversion of 7-methylxanthine to caffeine, likely via theobromine as an intermediate. This is 3,7-dimethylxanthine N-methyltransferase 1 from Coffea arabica (Arabian coffee).